A 265-amino-acid chain; its full sequence is Glutamate racemase (265 aa).

Substrate-binding positions include 9–10 and 41–42; these read DS and YG. The Proton donor/acceptor role is filled by C72. Residue 73-74 participates in substrate binding; that stretch reads NT. The active-site Proton donor/acceptor is the C183. Position 184 to 185 (184 to 185) interacts with substrate; the sequence is TH.

It belongs to the aspartate/glutamate racemases family.

The enzyme catalyses L-glutamate = D-glutamate. Its pathway is cell wall biogenesis; peptidoglycan biosynthesis. In terms of biological role, provides the (R)-glutamate required for cell wall biosynthesis. This is Glutamate racemase from Lysinibacillus sphaericus (Bacillus sphaericus).